Consider the following 427-residue polypeptide: Serine--tRNA ligase (427 aa).

232 to 234 provides a ligand contact to L-serine; the sequence is TAE. 263–265 contributes to the ATP binding site; it reads RSE. Glu286 is an L-serine binding site. 350 to 353 provides a ligand contact to ATP; that stretch reads EISS. Ser385 is a binding site for L-serine.

It belongs to the class-II aminoacyl-tRNA synthetase family. Type-1 seryl-tRNA synthetase subfamily. As to quaternary structure, homodimer. The tRNA molecule binds across the dimer.

It is found in the cytoplasm. The catalysed reaction is tRNA(Ser) + L-serine + ATP = L-seryl-tRNA(Ser) + AMP + diphosphate + H(+). It carries out the reaction tRNA(Sec) + L-serine + ATP = L-seryl-tRNA(Sec) + AMP + diphosphate + H(+). It participates in aminoacyl-tRNA biosynthesis; selenocysteinyl-tRNA(Sec) biosynthesis; L-seryl-tRNA(Sec) from L-serine and tRNA(Sec): step 1/1. Functionally, catalyzes the attachment of serine to tRNA(Ser). Is also able to aminoacylate tRNA(Sec) with serine, to form the misacylated tRNA L-seryl-tRNA(Sec), which will be further converted into selenocysteinyl-tRNA(Sec). This is Serine--tRNA ligase from Lacticaseibacillus paracasei (strain ATCC 334 / BCRC 17002 / CCUG 31169 / CIP 107868 / KCTC 3260 / NRRL B-441) (Lactobacillus paracasei).